The sequence spans 296 residues: Glycine--tRNA ligase alpha subunit (296 aa).

It belongs to the class-II aminoacyl-tRNA synthetase family. Tetramer of two alpha and two beta subunits.

Its subcellular location is the cytoplasm. The enzyme catalyses tRNA(Gly) + glycine + ATP = glycyl-tRNA(Gly) + AMP + diphosphate. This chain is Glycine--tRNA ligase alpha subunit, found in Francisella philomiragia subsp. philomiragia (strain ATCC 25017 / CCUG 19701 / FSC 153 / O#319-036).